A 207-amino-acid chain; its full sequence is FMN-dependent NADH:quinone oxidoreductase 1 (207 aa).

Residues Ser9, 15-17, and 139-142 each bind FMN; these read SIS and TRGG.

This sequence belongs to the azoreductase type 1 family. As to quaternary structure, homodimer. FMN serves as cofactor.

The enzyme catalyses 2 a quinone + NADH + H(+) = 2 a 1,4-benzosemiquinone + NAD(+). It catalyses the reaction N,N-dimethyl-1,4-phenylenediamine + anthranilate + 2 NAD(+) = 2-(4-dimethylaminophenyl)diazenylbenzoate + 2 NADH + 2 H(+). In terms of biological role, quinone reductase that provides resistance to thiol-specific stress caused by electrophilic quinones. Functionally, also exhibits azoreductase activity. Catalyzes the reductive cleavage of the azo bond in aromatic azo compounds to the corresponding amines. The polypeptide is FMN-dependent NADH:quinone oxidoreductase 1 (Trichormus variabilis (strain ATCC 29413 / PCC 7937) (Anabaena variabilis)).